The primary structure comprises 223 residues: Transcriptional regulatory protein PhoP (223 aa).

The Response regulatory domain maps to 2–116 (RVLVVEDNAL…EVMARMQALM (115 aa)). At Asp-51 the chain carries 4-aspartylphosphate. Residues 124–222 (SQVISLPPFQ…VRGQGYLFEL (99 aa)) constitute a DNA-binding region (ompR/PhoB-type).

As to quaternary structure, monomer in the inactive, unphosphorylated state and dimer in the active, phosphorylated state. Post-translationally, phosphorylated by PhoQ.

The protein resides in the cytoplasm. Its activity is regulated as follows. Feedback inhibited by MgrB, which seems to bind PhoQ, altering its activity and that of downstream effector PhoP. PhoP-regulated transcription is redox-sensitive, being activated when the periplasm becomes more reducing (deletion of dsbA/dsbB, or treatment with dithiothreitol). MgrB acts between DsbA/DsbB and PhoP/PhoQ in this pathway. Member of the two-component regulatory system PhoP/PhoQ involved in adaptation to low Mg(2+) environments and the control of acid resistance genes. In low periplasmic Mg(2+), PhoQ phosphorylates PhoP, resulting in the expression of PhoP-activated genes (PAG) and repression of PhoP-repressed genes (PRG). In high periplasmic Mg(2+), PhoQ dephosphorylates phospho-PhoP, resulting in the repression of PAG and may lead to expression of some PRG. Mediates magnesium influx to the cytosol by activation of MgtA. Promotes expression of the two-component regulatory system rstA/rstB and transcription of the hemL, mgrB, nagA, slyB, vboR and yrbL genes. This Escherichia coli (strain K12) protein is Transcriptional regulatory protein PhoP (phoP).